We begin with the raw amino-acid sequence, 152 residues long: UPF0756 membrane protein Moth_1009 (152 aa).

4 helical membrane-spanning segments follow: residues 5–25 (LIILAVLVVAVLGRANTVALA), 41–61 (IFPFIEKGGTFWGLVLLIAAI), 75–95 (LGHVFLSWVGLSAFILSLITT), and 117–137 (LILGAVIAAAFLGGVPVGPFI).

It belongs to the UPF0756 family.

It is found in the cell membrane. The chain is UPF0756 membrane protein Moth_1009 from Moorella thermoacetica (strain ATCC 39073 / JCM 9320).